The primary structure comprises 249 residues: MADS-box transcription factor 17 (249 aa).

Positions 1–61 constitute an MADS-box domain; the sequence is MGRGRVELKR…GKLYEFGSAG (61 aa). Positions 88–178 constitute a K-box domain; sequence HQSWYQEMSR…KNKLEAEADS (91 aa). Positions 228–249 are disordered; that stretch reads ANPRSNGGGGDQNNNFVMGWPL.

May interact with the K-box of MADS6. In terms of tissue distribution, expressed in the floral meristem, lodicule, palea, lemma, receptacle, empty glume, stamen, pistil, and ovule.

The protein resides in the nucleus. Its function is as follows. Probable transcription factor. Plays minor but redundant roles with MADS6 in floral development. In Oryza sativa subsp. japonica (Rice), this protein is MADS-box transcription factor 17 (MADS17).